Here is a 501-residue protein sequence, read N- to C-terminus: MSKIVKRKEKKANDELTSLAEKIRAKALENQKKLIEAEKEGGSESDSEEDATAEKKKVLKSKSKSTVSTQNENTNEDESFESFSELNLVPELIQACKNLNYSKPTPIQSKAIPPALEGHDIIGLAQTGSGKTAAFAIPILNRLWHDQEPYYACILAPTRELAQQIKETFDSLGSLMGVRSTCIVGGMNMMDQARDLMRKPHIIIATPGRLMDHLENTKGFSLRKLKFLVMDEADRLLDMEFGPVLDRILKIIPTQERTTYLFSATMTSKIDKLQRASLTNPVKCAVSNKYQTVDTLVQTLMVVPGGLKNTYLIYLLNEFIGKTMIIFTRTKANAERLSGLCNLLEFSATALHGDLNQNQRMGSLDLFKAGKRSILVATDVAARGLDIPSVDIVVNYDIPVDSKSYIHRVGRTARAGRSGKSISLVSQYDLELILRIEEVLGKKLPKESVDKNIILTLRDSVDKANGEVVMEMNRRNKEKIARGKGRRGRMMTRENMDMGER.

Positions 3 to 44 (KIVKRKEKKANDELTSLAEKIRAKALENQKKLIEAEKEGGSE) form a coiled coil. The segment at 36–79 (EAEKEGGSESDSEEDATAEKKKVLKSKSKSTVSTQNENTNEDES) is disordered. Phosphoserine occurs at positions 43, 45, and 47. Residues 81 to 109 (ESFSELNLVPELIQACKNLNYSKPTPIQS) carry the Q motif motif. The region spanning 112–284 (IPPALEGHDI…RASLTNPVKC (173 aa)) is the Helicase ATP-binding domain. 125 to 132 (AQTGSGKT) serves as a coordination point for ATP. The short motif at 231-234 (DEAD) is the DEAD box element. Positions 307–461 (LKNTYLIYLL…NIILTLRDSV (155 aa)) constitute a Helicase C-terminal domain. The tract at residues 480–501 (IARGKGRRGRMMTRENMDMGER) is disordered. Basic and acidic residues predominate over residues 491–501 (MTRENMDMGER).

This sequence belongs to the DEAD box helicase family. DDX47/RRP3 subfamily. As to quaternary structure, interacts with the SSU processome.

Its subcellular location is the nucleus. It catalyses the reaction ATP + H2O = ADP + phosphate + H(+). ATPase activity is stimulated upon the addition of RNA. ATP-dependent rRNA helicase required for pre-ribosomal RNA processing. Involved in the maturation of the 35S-pre-rRNA and to its cleavage to mature 18S rRNA. The chain is ATP-dependent rRNA helicase RRP3 from Saccharomyces cerevisiae (strain ATCC 204508 / S288c) (Baker's yeast).